The following is a 464-amino-acid chain: Kynureninase (464 aa).

Met-1 carries the N-acetylmethionine modification. Pyridoxal 5'-phosphate-binding positions include Leu-137, Thr-138, Phe-165–Asp-168, Ser-221, Asp-250, His-253, and Tyr-275. Lys-276 carries the post-translational modification N6-(pyridoxal phosphate)lysine. Residues Trp-305 and Asn-333 each coordinate pyridoxal 5'-phosphate.

This sequence belongs to the kynureninase family. In terms of assembly, homodimer. Requires pyridoxal 5'-phosphate as cofactor. In terms of tissue distribution, high levels in liver and kidney. Also detected in heart, retina, ovary. Lung, testis and brain.

The protein resides in the cytoplasm. The protein localises to the cytosol. The enzyme catalyses L-kynurenine + H2O = anthranilate + L-alanine + H(+). The catalysed reaction is 3-hydroxy-L-kynurenine + H2O = 3-hydroxyanthranilate + L-alanine + H(+). Its pathway is amino-acid degradation; L-kynurenine degradation; L-alanine and anthranilate from L-kynurenine: step 1/1. It functions in the pathway cofactor biosynthesis; NAD(+) biosynthesis; quinolinate from L-kynurenine: step 2/3. Its activity is regulated as follows. Inhibited by o-methylbenzoylalanine (OMBA). Catalyzes the cleavage of L-kynurenine (L-Kyn) and L-3-hydroxykynurenine (L-3OHKyn) into anthranilic acid (AA) and 3-hydroxyanthranilic acid (3-OHAA), respectively. Has a preference for the L-3-hydroxy form. Also has cysteine-conjugate-beta-lyase activity. This is Kynureninase (Kynu) from Rattus norvegicus (Rat).